The following is a 454-amino-acid chain: Cobyrinate a,c-diamide synthase (454 aa).

The 196-residue stretch at 247–442 folds into the GATase cobBQ-type domain; it reads KIGIAMDSAF…IHAHWASNPN (196 aa). The Nucleophile role is filled by cysteine 329.

Belongs to the CobB/CbiA family. Mg(2+) serves as cofactor.

It carries out the reaction cob(II)yrinate + 2 L-glutamine + 2 ATP + 2 H2O = cob(II)yrinate a,c diamide + 2 L-glutamate + 2 ADP + 2 phosphate + 2 H(+). It participates in cofactor biosynthesis; adenosylcobalamin biosynthesis; cob(II)yrinate a,c-diamide from sirohydrochlorin (anaerobic route): step 10/10. Its function is as follows. Catalyzes the ATP-dependent amidation of the two carboxylate groups at positions a and c of cobyrinate, using either L-glutamine or ammonia as the nitrogen source. The sequence is that of Cobyrinate a,c-diamide synthase from Leptospira interrogans serogroup Icterohaemorrhagiae serovar copenhageni (strain Fiocruz L1-130).